A 91-amino-acid polypeptide reads, in one-letter code: Putative regulatory protein Cphy_2880 (91 aa).

It belongs to the RemA family.

In Lachnoclostridium phytofermentans (strain ATCC 700394 / DSM 18823 / ISDg) (Clostridium phytofermentans), this protein is Putative regulatory protein Cphy_2880.